Consider the following 124-residue polypeptide: MNLIAQLEAEQIAALGKTIPDFKAGDTVRVGYKVTEGTRSRVQNYEGVVIGRKGGNTISASFTVRKISFGEGVERVFPLYSTNIDSIEVVRRGRVRRAKLYYLRSRRGKSARIAEVTNYKEKSE.

This sequence belongs to the bacterial ribosomal protein bL19 family.

Its function is as follows. This protein is located at the 30S-50S ribosomal subunit interface and may play a role in the structure and function of the aminoacyl-tRNA binding site. The protein is Large ribosomal subunit protein bL19 of Cereibacter sphaeroides (strain ATCC 17029 / ATH 2.4.9) (Rhodobacter sphaeroides).